The chain runs to 430 residues: UPF0597 protein BDI_1130 (430 aa).

Belongs to the UPF0597 family.

The protein is UPF0597 protein BDI_1130 of Parabacteroides distasonis (strain ATCC 8503 / DSM 20701 / CIP 104284 / JCM 5825 / NCTC 11152).